The following is a 380-amino-acid chain: Cytochrome b (380 aa).

4 helical membrane passes run 34–54 (FGSLLGICLLTQIMTGLLLAT), 78–99 (WLIRNLHANGASFFFICIYLHI), 114–134 (WNTGIILLLTLMATAFVGYVL), and 179–199 (FFALHFLLPFLIAGLTLIHLT). Heme b contacts are provided by H84 and H98. The heme b site is built by H183 and H197. Residue H202 participates in a ubiquinone binding. The next 4 helical transmembrane spans lie at 227–247 (LKDILGFMLMLLPLTTLALFS), 289–309 (LGGVLALAASVLILFLIPFLH), 321–341 (ISQLLFWTLVANLLILTWIGS), and 348–368 (FIIIGQLASLTYFLILLALFP).

It belongs to the cytochrome b family. The cytochrome bc1 complex contains 11 subunits: 3 respiratory subunits (MT-CYB, CYC1 and UQCRFS1), 2 core proteins (UQCRC1 and UQCRC2) and 6 low-molecular weight proteins (UQCRH/QCR6, UQCRB/QCR7, UQCRQ/QCR8, UQCR10/QCR9, UQCR11/QCR10 and a cleavage product of UQCRFS1). This cytochrome bc1 complex then forms a dimer. Heme b is required as a cofactor.

It localises to the mitochondrion inner membrane. Component of the ubiquinol-cytochrome c reductase complex (complex III or cytochrome b-c1 complex) that is part of the mitochondrial respiratory chain. The b-c1 complex mediates electron transfer from ubiquinol to cytochrome c. Contributes to the generation of a proton gradient across the mitochondrial membrane that is then used for ATP synthesis. The sequence is that of Cytochrome b (MT-CYB) from Buteo buteo (Eurasian buzzard).